The chain runs to 166 residues: Transcriptional repressor NrdR (166 aa).

Residues 3–34 fold into a zinc finger; that stretch reads CPFCGHDDTQVKDSRSTEDGVAIRRRRVCSAC. The ATP-cone domain occupies 49 to 139; sequence LSVTKADGRR…VYRDFREVEA (91 aa). Positions 146 to 166 are disordered; that stretch reads DMKPIPGETDTPSPDDSQETP.

This sequence belongs to the NrdR family. The cofactor is Zn(2+).

Negatively regulates transcription of bacterial ribonucleotide reductase nrd genes and operons by binding to NrdR-boxes. This is Transcriptional repressor NrdR from Gluconobacter oxydans (strain 621H) (Gluconobacter suboxydans).